Consider the following 512-residue polypeptide: 2,3-bisphosphoglycerate-independent phosphoglycerate mutase (512 aa).

Mn(2+)-binding residues include Asp-13 and Ser-63. The active-site Phosphoserine intermediate is the Ser-63. Substrate is bound by residues His-124, Arg-154 to Asp-155, Arg-186, Arg-192, Arg-262 to Arg-265, and Lys-337. Residues Asp-404, His-408, Asp-445, His-446, and His-463 each contribute to the Mn(2+) site.

It belongs to the BPG-independent phosphoglycerate mutase family. As to quaternary structure, monomer. Mn(2+) serves as cofactor.

It carries out the reaction (2R)-2-phosphoglycerate = (2R)-3-phosphoglycerate. The protein operates within carbohydrate degradation; glycolysis; pyruvate from D-glyceraldehyde 3-phosphate: step 3/5. In terms of biological role, essential for rapid growth and for sporulation. Catalyzes the interconversion of 2-phosphoglycerate and 3-phosphoglycerate. This chain is 2,3-bisphosphoglycerate-independent phosphoglycerate mutase, found in Oceanobacillus iheyensis (strain DSM 14371 / CIP 107618 / JCM 11309 / KCTC 3954 / HTE831).